Here is a 435-residue protein sequence, read N- to C-terminus: D-inositol 3-phosphate glycosyltransferase (435 aa).

His-16 is a binding site for 1D-myo-inositol 3-phosphate. UDP-N-acetyl-alpha-D-glucosamine contacts are provided by residues Gln-22–Pro-23 and Gly-30. 1D-myo-inositol 3-phosphate contacts are provided by residues Asp-27–Asn-32, Lys-85, Tyr-118, Thr-142, and Arg-162. Residues Arg-237, Lys-242, and Val-303 each coordinate UDP-N-acetyl-alpha-D-glucosamine. Positions 312, 313, and 315 each coordinate Mg(2+). Positions 325 and 333 each coordinate UDP-N-acetyl-alpha-D-glucosamine. Mg(2+) is bound at residue Thr-339.

It belongs to the glycosyltransferase group 1 family. MshA subfamily. Homodimer.

The catalysed reaction is 1D-myo-inositol 3-phosphate + UDP-N-acetyl-alpha-D-glucosamine = 1D-myo-inositol 2-acetamido-2-deoxy-alpha-D-glucopyranoside 3-phosphate + UDP + H(+). In terms of biological role, catalyzes the transfer of a N-acetyl-glucosamine moiety to 1D-myo-inositol 3-phosphate to produce 1D-myo-inositol 2-acetamido-2-deoxy-glucopyranoside 3-phosphate in the mycothiol biosynthesis pathway. In Kineococcus radiotolerans (strain ATCC BAA-149 / DSM 14245 / SRS30216), this protein is D-inositol 3-phosphate glycosyltransferase.